The primary structure comprises 289 residues: Early E1A protein (289 aa).

The interval 41–49 (PTLHELYDL) is interaction with RB1 in competition with E2F1. The tract at residues 76–140 (EGIDLLTFPP…PSDDEDEEGE (65 aa)) is interaction with UBE2I. Residues 82 to 107 (TFPPAPGSPEPPHLSRQPEQPEQRAL) form a disordered region. A compositionally biased stretch (pro residues) spans 84–93 (PPAPGSPEPP). Phosphoserine; by host is present on S89. Residues 113–117 (PNLVP) carry the PXLXP motif, interaction with host ZMYND11 motif. The short motif at 122–126 (LTCHE) is the LXCXE motif, interaction with host RB1 and TMEM173/STING element. Residues 154 to 174 (CRSCHYHRRNTGDPDIMCSLC) fold into a zinc finger. The segment at 186 to 240 (PVSEPEPEPEPEPEPARPTRRPKMAPAILRRPTSPVSRECNSSTDSCDSGPSNTP) is disordered. Phosphoserine; by host is present on residues S219 and S231. A compositionally biased stretch (polar residues) spans 219–237 (SPVSRECNSSTDSCDSGPS). The short motif at 258 to 289 (RVGGRRQAVECIEDLLNEPGQPLDLSCKRPRP) is the Bipartite nuclear localization signal element. Positions 279–283 (PLDLS) match the PXDLS motif, CTBP-binding motif.

It belongs to the adenoviridae E1A protein family. Interacts with host UBE2I; this interaction interferes with polySUMOylation. Interacts with host RB1; this interaction induces the aberrant dissociation of RB1-E2F1 complex thereby disrupting the activity of RB1 and activating E2F1-regulated genes. Interacts with host ATF7; the interaction enhances ATF7-mediated viral transactivation activity which requires the zinc binding domains of both proteins. Isoform early E1A 32 kDa protein and isoform early E1A 26 kDa protein interact (via N-terminus) with CUL1 and E3 ubiquitin ligase RBX1; these interactions inhibit RBX1-CUL1-dependent elongation reaction of ubiquitin chains and attenuate ubiquitination of SCF(FBXW7) target proteins. Interacts (via PXLXP motif) with host ZMYND11/BS69 (via MYND-type zinc finger); this interaction inhibits E1A mediated transactivation. Interacts with host EP300; this interaction stimulates the acetylation of RB1 by recruiting EP300 and RB1 into a multimeric-protein complex. Interacts with host CTBP1 and CTBP2; this interaction seems to potentiate viral replication. Interacts with host DCAF7 (ref.16). Interacts with host DYRK1A. Interacts with host KPNA4; this interaction allows E1A import into the host nucleus. Interacts with host EP400; this interaction stabilizes MYC. Interacts with host TBP protein; this interaction probably disrupts the TBP-TATA complex. Interacts (via LXCXE motif) with host TMEM173/STING; this interaction impairs the ability of TMEM173/STING to sense cytosolic DNA and promote the production of type I interferon (IFN-alpha and IFN-beta). Interacts (via C-terminus) with host ZBED1/hDREF (via C-terminus); the interaction is direct.

It is found in the host nucleus. In terms of biological role, plays a role in viral genome replication by driving entry of quiescent cells into the cell cycle. Stimulation of progression from G1 to S phase allows the virus to efficiently use the cellular DNA replicating machinery to achieve viral genome replication. E1A protein has both transforming and trans-activating activities. Induces the disassembly of the E2F1 transcription factor from RB1 by direct competition for the same binding site on RB1, with subsequent transcriptional activation of E2F1-regulated S-phase genes and of the E2 region of the adenoviral genome. Release of E2F1 leads to the ARF-mediated inhibition of MDM2 and causes TP53/p53 to accumulate because it is not targeted for degradation by MDM2-mediated ubiquitination anymore. This increase in TP53, in turn, would arrest the cell proliferation and direct its death but this effect is counteracted by the viral protein E1B-55K. Inactivation of the ability of RB1 to arrest the cell cycle is critical for cellular transformation, uncontrolled cellular growth and proliferation induced by viral infection. Interaction with RBX1 and CUL1 inhibits ubiquitination of the proteins targeted by SCF(FBXW7) ubiquitin ligase complex, and may be linked to unregulated host cell proliferation. The tumorigenesis-restraining activity of E1A may be related to the disruption of the host CtBP-CtIP complex through the CtBP binding motif. Interaction with host TMEM173/STING impairs the ability of TMEM173/STING to sense cytosolic DNA and promote the production of type I interferon (IFN-alpha and IFN-beta). Promotes the sumoylation of host ZBED1/hDREF with SUMO1. The chain is Early E1A protein from Homo sapiens (Human).